The following is a 349-amino-acid chain: MKLYLVTFLFFVIYKNKTFVDCVTKKQDVYLDDEFKSFTFFFASSPSANFLSRIVHSNEAKFTQIKNKTDIWNKTIDKAYSINQVSNNIMRVYISLLSLFLFPYFSYIGIFGHSRNKANLTLSSLLAYFALLVSFFLFNGILNIGFVTSLPLVVAVLIFILGVSDCEINFLYKYTRYIFCFIISKLIYDVVTYISKDGANIFDYGFSGHIYMNLLRGKYYIVLKLIHLIILSLISLIIIKICPKIFSNNHLKSPISITFDKYIISFLCSLPIATAISQVFYLLSKTINPIDPSIFFMIPSSINFSSTGTIFSLSIWILMSYLMTFLRNKVEADFNNILNKIPNNLPDFI.

The N-terminal stretch at 1–18 (MKLYLVTFLFFVIYKNKT) is a signal peptide. The Extracellular segment spans residues 19 to 91 (FVDCVTKKQD…INQVSNNIMR (73 aa)). A helical membrane pass occupies residues 92-112 (VYISLLSLFLFPYFSYIGIFG). Topologically, residues 113 to 117 (HSRNK) are cytoplasmic. Residues 118–138 (ANLTLSSLLAYFALLVSFFLF) traverse the membrane as a helical segment. Over 139 to 140 (NG) the chain is Extracellular. Residues 141–161 (ILNIGFVTSLPLVVAVLIFIL) form a helical membrane-spanning segment. At 162–176 (GVSDCEINFLYKYTR) the chain is on the cytoplasmic side. Residues 177 to 197 (YIFCFIISKLIYDVVTYISKD) form a helical membrane-spanning segment. Residues 198-218 (GANIFDYGFSGHIYMNLLRGK) are Extracellular-facing. A helical transmembrane segment spans residues 219 to 239 (YYIVLKLIHLIILSLISLIII). The Cytoplasmic portion of the chain corresponds to 240 to 262 (KICPKIFSNNHLKSPISITFDKY). The helical transmembrane segment at 263 to 283 (IISFLCSLPIATAISQVFYLL) threads the bilayer. The Extracellular segment spans residues 284 to 305 (SKTINPIDPSIFFMIPSSINFS). The helical transmembrane segment at 306–326 (STGTIFSLSIWILMSYLMTFL) threads the bilayer. Residues 327-349 (RNKVEADFNNILNKIPNNLPDFI) lie on the Cytoplasmic side of the membrane.

The protein localises to the cell membrane. Its function is as follows. Involved in the development of male gametocytes. The chain is Sexual stage-specific protein G37 from Plasmodium berghei (strain Anka).